Here is a 116-residue protein sequence, read N- to C-terminus: uncharacterized protein (116 aa).

3 helical membrane-spanning segments follow: residues 5–27 (AILL…AVPC), 42–64 (PFVP…TAGV), and 88–110 (VLHG…VVAI).

It localises to the cell membrane. This is an uncharacterized protein from Archaeoglobus fulgidus (strain ATCC 49558 / DSM 4304 / JCM 9628 / NBRC 100126 / VC-16).